Consider the following 856-residue polypeptide: Leucine--tRNA ligase (856 aa).

The 'HIGH' region signature appears at 53–63 (PYPSGNLHMGH). Positions 622-626 (KMSKS) match the 'KMSKS' region motif. Lys-625 provides a ligand contact to ATP.

Belongs to the class-I aminoacyl-tRNA synthetase family.

It is found in the cytoplasm. The catalysed reaction is tRNA(Leu) + L-leucine + ATP = L-leucyl-tRNA(Leu) + AMP + diphosphate. This Prochlorococcus marinus (strain MIT 9301) protein is Leucine--tRNA ligase.